Reading from the N-terminus, the 548-residue chain is Natural resistance-associated macrophage protein 1 (548 aa).

Residues 1–38 (MSGDTGPPKQGGTRYGSISSPPSPEPQQAPPGGTYLSE) are disordered. At 1-55 (MSGDTGPPKQGGTRYGSISSPPSPEPQQAPPGGTYLSEKIPIPDTESGTFSLRKL) the chain is on the cytoplasmic side. The helical transmembrane segment at 56-73 (WAFTGPGFLMSIAFLDPG) threads the bilayer. Residues 74–82 (NIESDLQAG) lie on the Extracellular side of the membrane. The chain crosses the membrane as a helical span at residues 83–102 (AVAGFKLLWVLLWATVLGLL). Residues 103–139 (CQRLAARLGVVTGKDLGEVCHLYYPKVPRILLWLTIE) lie on the Cytoplasmic side of the membrane. Residues 140 to 160 (LAIVGSDMQEVIGTAIAFSLL) form a helical membrane-spanning segment. The Extracellular segment spans residues 161-164 (SAGR). A helical membrane pass occupies residues 165 to 184 (IPLWGGVLITVVDTFFFLFL). Over 185-193 (DNYGLRKLE) the chain is Cytoplasmic. Residues 194 to 214 (AFFGFLITIMALTFGYEYVVA) traverse the membrane as a helical segment. Residues 215-237 (QPAQGALLQGLFLPSCPGCGQPE) lie on the Extracellular side of the membrane. A helical membrane pass occupies residues 238–256 (LLQAVGIIGAIIMPHNIYL). The Cytoplasmic portion of the chain corresponds to 257 to 284 (HSSLVKSREVDRSRRADIREANMYFLIE). Residues 285 to 304 (ATIALSVSFLINLFVMAVFG) traverse the membrane as a helical segment. Residues 305–346 (QAFYKQTNQAAFNICADSSLHDYAPIFPRNNLTVAVDIYQGG) lie on the Extracellular side of the membrane. A glycan (N-linked (GlcNAc...) asparagine) is linked at N335. A helical transmembrane segment spans residues 347–366 (VILGCLFGPPALYIWAVGLL). Topologically, residues 367–397 (AAGQSSTMTGTYAGQFVMEGFLKLRWSRFAR) are cytoplasmic. Residues 398–415 (VLLTRSCAILPTVLLAVF) traverse the membrane as a helical segment. Residues 416–426 (RDLRDLSGLND) are Extracellular-facing. A helical transmembrane segment spans residues 427 to 447 (LLNVLQSLLLPFAVLPILTFT). The Cytoplasmic portion of the chain corresponds to 448–463 (SMPALMQEFANGLVSK). Residues 464–485 (VITSSIMVLVCAVNLYFVISYL) form a helical membrane-spanning segment. The Extracellular portion of the chain corresponds to 486–493 (PSLPHPAY). Residues 494 to 513 (FSLVALLAAAYLGLTTYLVW) form a helical membrane-spanning segment. Residues 514 to 548 (TCLITQGATLLAHSSHQRFLYGLPEEDQEKGRTSG) are Cytoplasmic-facing.

The protein belongs to the NRAMP family.

It is found in the late endosome membrane. Its subcellular location is the lysosome membrane. It carries out the reaction Zn(2+)(in) + H(+)(out) = Zn(2+)(out) + H(+)(in). The enzyme catalyses Fe(2+)(in) + H(+)(out) = Fe(2+)(out) + H(+)(in). It catalyses the reaction Mn(2+)(in) + H(+)(out) = Mn(2+)(out) + H(+)(in). Its function is as follows. Macrophage-specific antiporter that fluxes metal ions in either direction against a proton gradient. Localized to late endosomal lysosomal membranes, delivers bivalent cations from the cytosol into these acidic compartments where they may directly affect antimicrobial activity. Involved in iron metabolism and host natural resistance to infection with intracellular parasites. Pathogen resistance involves sequestration of Fe(2+) and Mn(2+), cofactors of both prokaryotic and eukaryotic catalases and superoxide dismutases, not only to protect the macrophage against its own generation of reactive oxygen species, but to deny the cations to the pathogen for synthesis of its protective enzymes. This is Natural resistance-associated macrophage protein 1 (SLC11A1) from Bos taurus (Bovine).